Here is a 543-residue protein sequence, read N- to C-terminus: Reticulophagy regulator 2 (543 aa).

The next 3 helical transmembrane spans lie at 12 to 32, 100 to 120, and 204 to 224; these read AGGG…SLGM, SLRP…LDLW, and VPGI…PLVV. The span at 254-265 shows a compositional bias: basic residues; that stretch reads LHHKHDKRKRQG. Residues 254 to 287 form a disordered region; sequence LHHKHDKRKRQGKNAPPGGDEPLAETESESEAEL. The segment covering 275–285 has biased composition (acidic residues); it reads PLAETESESEA. Thr279 carries the phosphothreonine modification. A phosphoserine mark is found at Ser281, Ser283, Ser291, and Ser311. A Phosphothreonine modification is found at Thr334. 2 disordered regions span residues 336-394 and 411-486; these read VSED…DVAA and HFNG…EEEA. Residues Ser337, Ser344, Ser347, and Ser385 each carry the phosphoserine modification. The span at 461–480 shows a compositional bias: pro residues; the sequence is APSPSILPPVPQDSPQPLPA. The LIR motif signature appears at 490–495; sequence EDFELL. The interval 504-543 is disordered; that stretch reads NAELGLEPETPPKPPDAPPLGPDIHSLVQSDQEAQAVAEP. Residues 512-524 are compositionally biased toward pro residues; it reads ETPPKPPDAPPLG.

Belongs to the RETREG family. In terms of assembly, interacts with ATG8 family modifier proteins MAP1LC3A, MAP1LC3B, MAP1LC3C, GABARAP, GABARAPL1 and GABARAPL2. Shows higher affinity for GABARAPL1 than for MAP1LC3B. Interacts with CANX.

The protein localises to the endoplasmic reticulum membrane. Its function is as follows. Endoplasmic reticulum (ER)-anchored autophagy regulator which exists in an inactive state under basal conditions but is activated following cellular stress. When activated, induces ER fragmentation and mediates ER delivery into lysosomes through sequestration into autophagosomes via interaction with ATG8 family proteins. Required for collagen quality control in a LIR motif-independent manner. The chain is Reticulophagy regulator 2 from Homo sapiens (Human).